Consider the following 95-residue polypeptide: Alpha-conotoxin GeXXA (95 aa).

Residues 1 to 21 (MPKQEKMMLVLLILPLPYCNA) form the signal peptide. Positions 22–45 (AGVTTVQWGGHGDGLDRYLQRGVR) are excised as a propeptide. 4 disulfide bridges follow: Cys-64-Cys-73, Cys-69-Cys-81, Cys-74-Cys-91, and Cys-79-Cys-93.

This sequence belongs to the conotoxin D superfamily. In terms of assembly, homodimer. Pseudo-homodimer (identical sequence, different post-translational modifications). Expressed by the venom duct.

The protein resides in the secreted. Its function is as follows. Alpha-D-conopeptides act as non-competitive inhibitors of nicotinic acetylcholine receptors (nAChR). Through its two C-terminal domains, this homodimeric protein would bind to two nAChR allosteric sites, located outside the nAChR C-loop of the principal binding face and at the adjacent binding interface in a clockwise direction. This toxin has strong inhibitory activity on rat alpha-9-alpha-10 (CHRNA9-CHRNA10) (IC(50)=1.2 nM) and a moderate inhibitory activity on human alpha-7 (CHRNA7) (IC(50)=210 nM), rat alpha-3-beta-2 (CHRNA3-CHRNB2) (IC(50)=498 nM), rat alpha-3-beta-4 (CHRNA3-CHRNB4) (IC(50)=614 nM) and rat alpha-1-beta-1-delta-epsilon (CHRNA1-CHRNB1-CHRNE-CHRND) (IC(50)=743 nM) subtypes. Shows a weaker inhibitory activity on human alpha-9-alpha-10 (IC(50)=28 nM) than on the rat channel. This is explained by a different residue in the probable binding site (His-31 in rat alpha-10 and Leu-31 in human). In Conus generalis (General cone), this protein is Alpha-conotoxin GeXXA.